The primary structure comprises 623 residues: DNA-directed RNA polymerase subunit beta' (623 aa).

Cys-70, Cys-72, Cys-85, and Cys-88 together coordinate Zn(2+). The Mg(2+) site is built by Asp-466, Asp-468, and Asp-470.

Belongs to the RNA polymerase beta' chain family. RpoC1 subfamily. As to quaternary structure, in plastids the minimal PEP RNA polymerase catalytic core is composed of four subunits: alpha, beta, beta', and beta''. When a (nuclear-encoded) sigma factor is associated with the core the holoenzyme is formed, which can initiate transcription. Requires Mg(2+) as cofactor. It depends on Zn(2+) as a cofactor.

The protein resides in the plastid. Its subcellular location is the chloroplast. It catalyses the reaction RNA(n) + a ribonucleoside 5'-triphosphate = RNA(n+1) + diphosphate. Its function is as follows. DNA-dependent RNA polymerase catalyzes the transcription of DNA into RNA using the four ribonucleoside triphosphates as substrates. The chain is DNA-directed RNA polymerase subunit beta' from Rhodomonas salina (Cryptomonas salina).